The sequence spans 243 residues: Adenosylcobinamide-GDP ribazoletransferase (243 aa).

5 helical membrane passes run 31 to 48 (LLFYPLVGLLFGVLLWVL), 61 to 81 (AALLLTAWVLLSGGLHLDGLA), 109 to 129 (IAVVTLVLVLLLKFTALVALI), 134 to 154 (GFALLLAPLIGRGALLGLFLC), and 188 to 208 (LLLGGYSGLWAVLLATVLFFW).

It belongs to the CobS family. Mg(2+) is required as a cofactor.

It localises to the cell inner membrane. It catalyses the reaction alpha-ribazole + adenosylcob(III)inamide-GDP = adenosylcob(III)alamin + GMP + H(+). The enzyme catalyses alpha-ribazole 5'-phosphate + adenosylcob(III)inamide-GDP = adenosylcob(III)alamin 5'-phosphate + GMP + H(+). It participates in cofactor biosynthesis; adenosylcobalamin biosynthesis; adenosylcobalamin from cob(II)yrinate a,c-diamide: step 7/7. In terms of biological role, joins adenosylcobinamide-GDP and alpha-ribazole to generate adenosylcobalamin (Ado-cobalamin). Also synthesizes adenosylcobalamin 5'-phosphate from adenosylcobinamide-GDP and alpha-ribazole 5'-phosphate. The sequence is that of Adenosylcobinamide-GDP ribazoletransferase from Pseudomonas fluorescens (strain ATCC BAA-477 / NRRL B-23932 / Pf-5).